Reading from the N-terminus, the 146-residue chain is uncharacterized protein (146 aa).

The HTH marR-type domain maps to 1-137 (MLSQEFFNSF…TINVMNQIHE (137 aa)).

This is an uncharacterized protein from Staphylococcus aureus (strain MRSA252).